A 291-amino-acid polypeptide reads, in one-letter code: Endo-1,4-beta-xylanase 11B (291 aa).

An N-terminal signal peptide occupies residues 1–19 (MVAFSSLFLGASIAATALA). A GH11 domain is found at 34–222 (TYTQSATGTH…SSGSARINVG (189 aa)). Asparagine 93 carries an N-linked (GlcNAc...) asparagine glycan. Glutamate 118 acts as the Nucleophile in catalysis. The active-site Proton donor is the glutamate 209. The disordered stretch occupies residues 223–246 (GGSTGGGNNGGGNNGGNPGGNPGG). One can recognise a CBM1 domain in the interval 255–291 (NCSPRWGQCGGQGWNGPTCCESGTTCRQQNQWYSQCL).

It belongs to the glycosyl hydrolase 11 (cellulase G) family.

It localises to the secreted. It carries out the reaction Endohydrolysis of (1-&gt;4)-beta-D-xylosidic linkages in xylans.. It participates in glycan degradation; xylan degradation. Its activity is regulated as follows. The activity iss completely inhibited by Hg(2+), a metal ion that interacts with Trp and oxidizes the indole ring, and is significantly enhanced by beta-mercaptoethanol, which counteracts the oxidation effects of the S-S linkage between Cys residues. Endo-1,4-beta-xylanase involved in the hydrolysis of xylan, a major structural heterogeneous polysaccharide found in plant biomass representing the second most abundant polysaccharide in the biosphere, after cellulose. Shows maximum activity on soluble wheat arabinoxylan (defined as 100%), moderate activity on birchwood xylan (80.5%) and beechwood xylan (76.2%), and weak activity on insoluble wheat arabinoxylan (7.0%). Has no activity towards glucan or carboxymethyl cellulose-sodium (CMC-Na). This chain is Endo-1,4-beta-xylanase 11B, found in Humicola insolens (Soft-rot fungus).